A 536-amino-acid polypeptide reads, in one-letter code: Chaperonin GroEL (536 aa).

ATP contacts are provided by residues 29–32, 86–90, Gly413, and Asp494; these read TLGP and DGTTT.

Belongs to the chaperonin (HSP60) family. Forms a cylinder of 14 subunits composed of two heptameric rings stacked back-to-back. Interacts with the co-chaperonin GroES.

The protein localises to the cytoplasm. The enzyme catalyses ATP + H2O + a folded polypeptide = ADP + phosphate + an unfolded polypeptide.. Its function is as follows. Together with its co-chaperonin GroES, plays an essential role in assisting protein folding. The GroEL-GroES system forms a nano-cage that allows encapsulation of the non-native substrate proteins and provides a physical environment optimized to promote and accelerate protein folding. This chain is Chaperonin GroEL, found in Acholeplasma laidlawii (strain PG-8A).